Consider the following 136-residue polypeptide: METVSVEEGLDFAPGMVSQKCLLCMCKLESGGCKPIGCRMDVGSLSCGYFQIKQPYWIDCGKPGKDWKSCSNDINCSSKCVQQYMKRYATHYRCPLNCEGFAREHNGGPNGCHSSRTLKYWELLQKIPGCKGVKFS.

Positions 1–11 (METVSVEEGLD) are cleaved as a signal peptide. Residues 14 to 130 (PGMVSQKCLL…WELLQKIPGC (117 aa)) enclose the I-type lysozyme domain. 7 disulfide bridges follow: cysteine 21–cysteine 98, cysteine 24–cysteine 130, cysteine 26–cysteine 33, cysteine 38–cysteine 47, cysteine 60–cysteine 80, cysteine 70–cysteine 76, and cysteine 94–cysteine 112. Catalysis depends on glutamate 29, which acts as the Proton donor. Aspartate 41 acts as the Nucleophile in catalysis. A substrate-binding site is contributed by 53–59 (KQPYWID). The N-linked (GlcNAc...) asparagine glycan is linked to asparagine 75. Substrate is bound by residues tyrosine 84, tyrosine 92, 105–107 (HNG), and lysine 119.

Homodimer in its autoinhibited state. Active as monomer.

It is found in the secreted. The catalysed reaction is Hydrolysis of (1-&gt;4)-beta-linkages between N-acetylmuramic acid and N-acetyl-D-glucosamine residues in a peptidoglycan and between N-acetyl-D-glucosamine residues in chitodextrins.. Chitinase activity is activated by high salt concentrations which cause the release of the monomer from the autoinhibited homodimer. Its function is as follows. Bacteriolytic activity against Gram-positive bacterium M.luteus and thereby probably protects against bacterial infection. Also has chitinase activity. May act as an ispopeptidase, cleaving isopeptide bonds between the side chains of Lys and Gln residues in proteins or in the cross-linking peptide of peptidoglycan in bacterial cell walls. The chain is Invertebrate-type lysozyme from Ruditapes philippinarum (Japanese carpet shell).